A 68-amino-acid chain; its full sequence is Preprofallaxidin-5 (68 aa).

The signal sequence occupies residues 1–22; the sequence is MASLKKSLFLVLFLGFVSLSIC. A propeptide spanning residues 23–51 is cleaved from the precursor; it reads EEEKREDKEDEGENEEAEENHEERSEEKR. The tract at residues 24–50 is disordered; the sequence is EEKREDKEDEGENEEAEENHEERSEEK. The span at 30–42 shows a compositional bias: acidic residues; that stretch reads KEDEGENEEAEEN. Leu-64 is modified (leucine amide). Residue Ser-68 is a propeptide.

The protein belongs to the frog skin active peptide (FSAP) family. Brevinin subfamily. As to expression, expressed by the skin glands.

The protein localises to the secreted. The polypeptide is Preprofallaxidin-5 (Litoria fallax (Eastern dwarf tree frog)).